We begin with the raw amino-acid sequence, 582 residues long: Cryptochrome DASH, chloroplastic/mitochondrial (582 aa).

Residues 1–49 (MLHFLSSSSPLNPQFLLLPRQSARLRVLLSIPVSAMSSSSSSSSRGALA) constitute a chloroplast and mitochondrion transit peptide. In terms of domain architecture, Photolyase/cryptochrome alpha/beta spans 84 to 234 (GVAIVWFRND…KLQLIWGATL (151 aa)). The segment at 560–582 (GHQKRDQQFNRQRRPGHMYRRQK) is disordered. The span at 570 to 582 (RQRRPGHMYRRQK) shows a compositional bias: basic residues.

The protein belongs to the DNA photolyase class-1 family. FAD is required as a cofactor. The cofactor is (6R)-5,10-methylene-5,6,7,8-tetrahydrofolate.

It localises to the plastid. The protein resides in the chloroplast. The protein localises to the mitochondrion. May have a photoreceptor function. Binds ss- and ds-DNA in a sequence non-specific manner, lacks photolyase activity. This is Cryptochrome DASH, chloroplastic/mitochondrial (CRYD) from Oryza sativa subsp. japonica (Rice).